The sequence spans 581 residues: Kelch-like protein 38 (581 aa).

One can recognise a BTB domain in the interval 34–101 (TDVSICAGAR…VYTGEAHIAT (68 aa)). Residues 136–237 (CLGMIRLSEI…HPAFFHHFIA (102 aa)) enclose the BACK domain. Kelch repeat units follow at residues 285–332 (FLIL…TLHR), 334–383 (IYVL…AHKN), 384–431 (FIFS…VKDQ), 433–479 (LYLF…VLGE), 480–521 (RIVI…VMGN), and 523–573 (LYVT…TLQC).

In Homo sapiens (Human), this protein is Kelch-like protein 38 (KLHL38).